The sequence spans 87 residues: Acyl-CoA-binding protein (87 aa).

Residues 3-87 (LKEEFEEHAV…KVKQLLEESA (85 aa)) enclose the ACB domain. An acyl-CoA is bound by residues 30–34 (YGLYK), lysine 56, and tyrosine 75.

It belongs to the ACBP family.

Binds medium- and long-chain acyl-CoA esters with very high affinity and may function as an intracellular carrier of acyl-CoA esters. This Fritillaria agrestis (Stinkbells) protein is Acyl-CoA-binding protein (ACABP).